A 474-amino-acid chain; its full sequence is SHC-transforming protein 3 (474 aa).

The tract at residues 1-27 (MSATRKSRAGDEPLPRPPRGAPHTSDQ) is disordered. The PID domain maps to 29–214 (LGPGVTYVVK…LDEPWTEEEG (186 aa)). The CH1 stretch occupies residues 215 to 378 (DGPDHPYYNS…RMLEELNAEP (164 aa)). S282 carries the phosphoserine modification. The tract at residues 308–328 (QPVPPQVWPAATSSTESSPRK) is disordered. The 92-residue stretch at 379 to 470 (WYQGEMSRKE…GSELCLQQPV (92 aa)) folds into the SH2 domain.

Interacts with the Trk receptors in a phosphotyrosine-dependent manner. Once activated, binds to GRB2. Interacts with activated EGF receptors. Tyrosine phosphorylated. As to expression, predominantly expressed in the adult brain.

Its function is as follows. Signaling adapter that couples activated growth factor receptors to signaling pathway in neurons. Involved in the signal transduction pathways of neurotrophin-activated Trk receptors in cortical neurons. This Mus musculus (Mouse) protein is SHC-transforming protein 3 (Shc3).